The sequence spans 132 residues: Probable histone H2A.2 (132 aa).

The protein belongs to the histone H2A family. As to quaternary structure, the nucleosome is a histone octamer containing two molecules each of H2A, H2B, H3 and H4 assembled in one H3-H4 heterotetramer and two H2A-H2B heterodimers. The octamer wraps approximately 147 bp of DNA. In terms of processing, not ubiquitinated. Expressed mainly in non-dividing tissues of the plant. Also found in meristems and dividing cells.

It localises to the nucleus. It is found in the chromosome. Core component of nucleosome. Nucleosomes wrap and compact DNA into chromatin, limiting DNA accessibility to the cellular machineries which require DNA as a template. Histones thereby play a central role in transcription regulation, DNA repair, DNA replication and chromosomal stability. DNA accessibility is regulated via a complex set of post-translational modifications of histones, also called histone code, and nucleosome remodeling. The sequence is that of Probable histone H2A.2 from Arabidopsis thaliana (Mouse-ear cress).